Reading from the N-terminus, the 364-residue chain is Triacylglycerol lipase (364 aa).

The N-terminal stretch at 1-44 is a signal peptide; that stretch reads MARTMRSRVVAGAVACAMSIAPFAGTTAVMTLATTHAAMAATAP. The region spanning 54–266 is the AB hydrolase-1 domain; sequence PIILVHGLSG…AIQPTLSVFG (213 aa). A substrate-binding site is contributed by Leu-61. Residue Ser-131 is the Nucleophile of the active site. Position 132 (Gln-132) interacts with substrate. A disulfide bond links Cys-234 and Cys-314. Asp-286 is a binding site for Ca(2+). Catalysis depends on charge relay system residues Asp-308 and His-330. The Ca(2+) site is built by Asp-332, Gln-336, and Val-340.

This sequence belongs to the AB hydrolase superfamily. Pseudomonas lipase family. Monomer. Requires Ca(2+) as cofactor.

It is found in the secreted. The catalysed reaction is a triacylglycerol + H2O = a diacylglycerol + a fatty acid + H(+). Inhibited by RC-(Rp,Sp)- and SC-(Rp,Sp)-1,2-dioctylcarbamoylglycero-3-O-p-nitrophenyl octylphosphonate. Also inhibited by diethyl-p-nitrophenylphosphate (E600). Functionally, catalyzes the hydrolysis of triacylglycerol. It shows a preference for triacylglycerols with a chain length between 6 and 12 carbons. The polypeptide is Triacylglycerol lipase (Burkholderia cepacia (Pseudomonas cepacia)).